A 571-amino-acid chain; its full sequence is Proline--tRNA ligase (571 aa).

This sequence belongs to the class-II aminoacyl-tRNA synthetase family. ProS type 1 subfamily. As to quaternary structure, homodimer.

The protein resides in the cytoplasm. It catalyses the reaction tRNA(Pro) + L-proline + ATP = L-prolyl-tRNA(Pro) + AMP + diphosphate. In terms of biological role, catalyzes the attachment of proline to tRNA(Pro) in a two-step reaction: proline is first activated by ATP to form Pro-AMP and then transferred to the acceptor end of tRNA(Pro). As ProRS can inadvertently accommodate and process non-cognate amino acids such as alanine and cysteine, to avoid such errors it has two additional distinct editing activities against alanine. One activity is designated as 'pretransfer' editing and involves the tRNA(Pro)-independent hydrolysis of activated Ala-AMP. The other activity is designated 'posttransfer' editing and involves deacylation of mischarged Ala-tRNA(Pro). The misacylated Cys-tRNA(Pro) is not edited by ProRS. This is Proline--tRNA ligase from Shewanella baltica (strain OS195).